A 111-amino-acid chain; its full sequence is MSMKTLPKERRFETFSYLPPLSDRQIAAQIEYMIEQGFHPLIEFNEHSNPEEFYWTMWKLPLFDCKSPQQVLDEVRECRSEYGDCYIRVAGFDNIKQCQTVSFIVHRPGRY.

This sequence belongs to the RuBisCO small chain family. As to quaternary structure, heterohexadecamer of 8 large and 8 small subunits. The CcmM short form purifies from carboxysomes in complex with both RuBisCO subunits; a second complex with full-length CcmM and RuBisCO also includes carbonic anhydrase (CA, ccaA). RuBisCO-CcmM complexes are probably associated with the carboxysome shell. Isolated reduced and oxidized SSUL1 binds holo-RuBisCO (RbcL(8)-RbcS(8)) but not either subunit octamer alone; RuBisCO has a higher affinity for reduced SSUL1.

The protein resides in the carboxysome. RuBisCO catalyzes two reactions: the carboxylation of D-ribulose 1,5-bisphosphate, the primary event in carbon dioxide fixation, as well as the oxidative fragmentation of the pentose substrate in the photorespiration process. Both reactions occur simultaneously and in competition at the same active site. Its function is as follows. Beta-carboxysome assembly initiates when soluble RuBisCO aggregates is condensed into a liquid matrix in a pre-carboxysome by the RbcS-like domains of probably both CcmM58 and CcmM35. CcmN interacts with the N-terminus of CcmM58, and then recruits the CcmK2 major shell protein via CcmN's encapsulation peptide. Shell formation requires CcmK proteins and CcmO. CcmL caps the otherwise elongated carboxysome. Once fully encapsulated carboxysomes are formed, they migrate within the cell probably via interactions with the cytoskeleton. The chain is Ribulose bisphosphate carboxylase small subunit from Synechococcus elongatus (strain ATCC 33912 / PCC 7942 / FACHB-805) (Anacystis nidulans R2).